The primary structure comprises 148 residues: 3-dehydroquinate dehydratase (148 aa).

Tyrosine 26 (proton acceptor) is an active-site residue. Substrate is bound by residues asparagine 77, histidine 83, and aspartate 90. Histidine 103 acts as the Proton donor in catalysis. Substrate contacts are provided by residues 104 to 105 (LS) and arginine 114.

It belongs to the type-II 3-dehydroquinase family. In terms of assembly, homododecamer.

It carries out the reaction 3-dehydroquinate = 3-dehydroshikimate + H2O. Its pathway is metabolic intermediate biosynthesis; chorismate biosynthesis; chorismate from D-erythrose 4-phosphate and phosphoenolpyruvate: step 3/7. In terms of biological role, catalyzes a trans-dehydration via an enolate intermediate. The sequence is that of 3-dehydroquinate dehydratase from Chlorobaculum tepidum (strain ATCC 49652 / DSM 12025 / NBRC 103806 / TLS) (Chlorobium tepidum).